A 423-amino-acid chain; its full sequence is MATAMAEDTSFEGDQLASMTTDDIGRASRLLANEIRILKEESQRTNLDLESVKEKIKENQEKIKLNKQLPYLVGNIVEILEMSPEDDAEEDGANIDLDSQRKGKCVVLKTSTRQTIFLPVVGLVDPDTLKPGDLVGVNKDSYLILDTLPSEYDSRVKAMEVDEKPTEDYNDIGGLEKQIQELVEAIVLPMTHKEQFEKLGIRPPKGVLLYGPPGTGKTLMARACAAQTNATFLKLAGPQLVQMFIGDGAKLVRDAFLLAKEKSPCIIFIDEIDAIGTKRFDSEVSGDREVQRTMLELLNQLDGFSSDDRIKVIAATNRADILDPALMRSGRLDRKIEFPHPTEEARGRILQIHSRKMNVNADVNFEELARSTDDFNGAQLKAVCVEAGMLALRRDATEVNHEDFNEGIIQVQAKKKASLNYYA.

Ser-18 is subject to Phosphoserine. An ATP-binding site is contributed by 211–218 (GPPGTGKT). Residues Lys-234, Lys-278, and Lys-415 each participate in a glycyl lysine isopeptide (Lys-Gly) (interchain with G-Cter in ubiquitin) cross-link.

It belongs to the AAA ATPase family. As to quaternary structure, component of the 19S regulatory particle (RP/PA700) base subcomplex of the 26S proteasome. The 26S proteasome is composed of a core protease (CP), known as the 20S proteasome, capped at one or both ends by the 19S regulatory particle (RP/PA700). The RP/PA700 complex is composed of at least 17 different subunits in two subcomplexes, the base and the lid, which form the portions proximal and distal to the 20S proteolytic core, respectively.

Its subcellular location is the cytoplasm. It is found in the nucleus. The 26S proteasome is involved in the ATP-dependent degradation of ubiquitinated proteins. The regulatory (or ATPase) complex confers ATP dependency and substrate specificity to the 26S complex. The polypeptide is 26S proteasome regulatory subunit 6A homolog B (RPT5B) (Arabidopsis thaliana (Mouse-ear cress)).